The sequence spans 189 residues: Protein sisterless A (189 aa).

Positions 93 to 124 (DCRGSGSGSGSGSGSDVKDAQRQRAESCRKSR) are disordered. Residues 108-121 (DVKDAQRQRAESCR) are compositionally biased toward basic and acidic residues.

As to quaternary structure, homodimer. Interacts with dpn (via bHLH motif). Interacts with da (via bHLH motif). Interacts with Bap60. In terms of tissue distribution, localizes to all the embryonic nuclei until nuclear cycle 9, when expression ceases in the prepole cell nuclei. Associates with the somatic nuclei through cycle 10. By nuclear cycle 12, distributes uniformly in the somatic portion of the embryo and no longer associates with the nuclei. After early cycle 14 (beginning of cellularization) there is very little or no expression in the periphery of the embryo or in either the somatic or germ cells. In the yolk, accumulates at the nuclei from nuclear cycle 8 until 10-11 hours after fertilization.

It is found in the nucleus. In terms of biological role, involved in sex determination and dosage compensation. Required for proper expression of Sxl in embryonic somatic cells. Also has an essential function in the yolk nuclei. Involved in endoderm migration and midgut formation. The chain is Protein sisterless A (sisA) from Drosophila melanogaster (Fruit fly).